A 288-amino-acid polypeptide reads, in one-letter code: Heme oxygenase 1 (288 aa).

Topologically, residues 1 to 265 are cytoplasmic; sequence MERPQPDSMP…KTPLNTHSQA (265 aa). Heme b-binding residues include Lys18, His25, Tyr134, and Arg183. The segment at 223–260 is disordered; sequence HDTKDQSPSRAPGLRQRASNKAQDSAPVETPRGKTPLN. Position 229 is a phosphoserine (Ser229). A helical; Anchor for type IV membrane protein transmembrane segment spans residues 266–288; that stretch reads PLLRWVLTLSFLVATVAVGLYAM.

This sequence belongs to the heme oxygenase family. As to quaternary structure, homodimer and higher order homooligomer. Oligomerization is crucial for its stability and function in the endoplasmic reticulum. Interacts with FLVCR2; this interaction is potentiated in the presence of heme. A soluble form arises by proteolytic removal of the membrane anchor.

It localises to the endoplasmic reticulum membrane. It carries out the reaction heme b + 3 reduced [NADPH--hemoprotein reductase] + 3 O2 = biliverdin IXalpha + CO + Fe(2+) + 3 oxidized [NADPH--hemoprotein reductase] + 3 H2O + H(+). Functionally, catalyzes the oxidative cleavage of heme at the alpha-methene bridge carbon, released as carbon monoxide (CO), to generate biliverdin IXalpha, while releasing the central heme iron chelate as ferrous iron. Affords protection against programmed cell death and this cytoprotective effect relies on its ability to catabolize free heme and prevent it from sensitizing cells to undergo apoptosis. In terms of biological role, catalyzes the oxidative cleavage of heme at the alpha-methene bridge carbon, released as carbon monoxide (CO), to generate biliverdin IXalpha, while releasing the central heme iron chelate as ferrous iron. In Pongo abelii (Sumatran orangutan), this protein is Heme oxygenase 1 (HMOX1).